The chain runs to 37 residues: Neuropeptide Y1-like conopeptide (37 aa).

The residue at position 37 (Phe-37) is a Phenylalanine amide.

Belongs to the NPY family. Expressed by the venom duct.

Its subcellular location is the secreted. In terms of biological role, causes hyperactivity such as jumping, rapid circling and tail flicking, when intraventricularly injected into mice brain. This chain is Neuropeptide Y1-like conopeptide, found in Conus betulinus (Beech cone).